Consider the following 75-residue polypeptide: Conotoxin Vc6.15 (75 aa).

The first 19 residues, 1-19, serve as a signal peptide directing secretion; that stretch reads MEKLTILLHVAAVLMSTQA. The propeptide occupies 20 to 41; that stretch reads LIQEQRQKAKINLFSKRKPSAE. 3 disulfide bridges follow: C49–C62, C55–C66, and C61–C71.

This sequence belongs to the conotoxin O2 superfamily. As to expression, expressed by the venom duct.

It is found in the secreted. Functionally, inhibits voltage-gated ion channels. The polypeptide is Conotoxin Vc6.15 (Conus victoriae (Queen Victoria cone)).